The sequence spans 361 residues: Peptide chain release factor 1 (361 aa).

Gln237 carries the post-translational modification N5-methylglutamine. Residues 287-297 show a composition bias toward basic and acidic residues; that stretch reads KQQKEQSDTRK. The tract at residues 287–313 is disordered; it reads KQQKEQSDTRKSLVGSGDRSERIRTYN.

Belongs to the prokaryotic/mitochondrial release factor family. Post-translationally, methylated by PrmC. Methylation increases the termination efficiency of RF1.

The protein localises to the cytoplasm. Its function is as follows. Peptide chain release factor 1 directs the termination of translation in response to the peptide chain termination codons UAG and UAA. The sequence is that of Peptide chain release factor 1 from Francisella tularensis subsp. tularensis (strain FSC 198).